The sequence spans 241 residues: 15,16-dihydrobiliverdin:ferredoxin oxidoreductase (241 aa).

Residues Arg-16 to Ser-35 are disordered.

It belongs to the HY2 family.

The enzyme catalyses 15,16-dihydrobiliverdin + oxidized 2[4Fe-4S]-[ferredoxin] = biliverdin IXalpha + reduced 2[4Fe-4S]-[ferredoxin] + 2 H(+). Functionally, catalyzes the two-electron reduction of biliverdin IX-alpha at the C15 methine bridge. The chain is 15,16-dihydrobiliverdin:ferredoxin oxidoreductase from Synechococcus sp. (strain WH7803).